Consider the following 97-residue polypeptide: Small cell adhesion glycoprotein (97 aa).

The Extracellular portion of the chain corresponds to 1 to 36 (MTSFPTTPPPAEELMATTILQATEALSPEAEASTAL). T2 is a glycosylation site (O-linked (GalNAc...) threonine). O-linked (GalNAc...) serine glycosylation occurs at S3. T6, T7, T17, T18, and T23 each carry an O-linked (GalNAc...) threonine glycan. Residues 37-57 (IAVVITVVFLTLLSVVILIFF) traverse the membrane as a helical; Signal-anchor for type III membrane protein segment. At 58–97 (YLYKNKGSYVTYEPADGEPGAVVLMENDSAKGREKEEYFI) the chain is on the cytoplasmic side.

Belongs to the SMAGP family. Post-translationally, O-glycosylated. The O-glycan is modified with sialic acid residues.

It is found in the cell membrane. It localises to the cytoplasmic vesicle membrane. Its function is as follows. May play a role in epithelial cell-cell contacts. May play a role in tumor invasiveness and metastasis formation. This chain is Small cell adhesion glycoprotein (SMAGP), found in Bos taurus (Bovine).